The sequence spans 75 residues: Putative defensin-like protein 271 (75 aa).

The signal sequence occupies residues 1–23 (MTSMKLHIVALCIIVSFLVNVQS). 4 disulfides stabilise this stretch: Cys-33-Cys-72, Cys-39-Cys-61, Cys-45-Cys-70, and Cys-49-Cys-71.

It belongs to the DEFL family.

Its subcellular location is the secreted. This Arabidopsis thaliana (Mouse-ear cress) protein is Putative defensin-like protein 271.